The following is a 418-amino-acid chain: Serine hydroxymethyltransferase (418 aa).

Residues leucine 120 and 124 to 126 (GHL) contribute to the (6S)-5,6,7,8-tetrahydrofolate site. Lysine 229 carries the N6-(pyridoxal phosphate)lysine modification. 353 to 355 (SPF) contacts (6S)-5,6,7,8-tetrahydrofolate.

This sequence belongs to the SHMT family. Homodimer. It depends on pyridoxal 5'-phosphate as a cofactor.

It is found in the cytoplasm. It catalyses the reaction (6R)-5,10-methylene-5,6,7,8-tetrahydrofolate + glycine + H2O = (6S)-5,6,7,8-tetrahydrofolate + L-serine. Its pathway is one-carbon metabolism; tetrahydrofolate interconversion. It participates in amino-acid biosynthesis; glycine biosynthesis; glycine from L-serine: step 1/1. Functionally, catalyzes the reversible interconversion of serine and glycine with tetrahydrofolate (THF) serving as the one-carbon carrier. This reaction serves as the major source of one-carbon groups required for the biosynthesis of purines, thymidylate, methionine, and other important biomolecules. Also exhibits THF-independent aldolase activity toward beta-hydroxyamino acids, producing glycine and aldehydes, via a retro-aldol mechanism. The sequence is that of Serine hydroxymethyltransferase from Psychrobacter sp. (strain PRwf-1).